The sequence spans 235 residues: UDP-2,3-diacylglucosamine hydrolase (235 aa).

Residues Asp9, His11, Asp42, Asn80, and His115 each coordinate Mn(2+). A substrate-binding site is contributed by 80-81 (NR). 5 residues coordinate substrate: Asp123, Ser161, Lys165, Lys168, and His196. Residues His196 and His198 each coordinate Mn(2+).

Belongs to the LpxH family. The cofactor is Mn(2+).

It is found in the cell inner membrane. It carries out the reaction UDP-2-N,3-O-bis[(3R)-3-hydroxytetradecanoyl]-alpha-D-glucosamine + H2O = 2-N,3-O-bis[(3R)-3-hydroxytetradecanoyl]-alpha-D-glucosaminyl 1-phosphate + UMP + 2 H(+). Its pathway is glycolipid biosynthesis; lipid IV(A) biosynthesis; lipid IV(A) from (3R)-3-hydroxytetradecanoyl-[acyl-carrier-protein] and UDP-N-acetyl-alpha-D-glucosamine: step 4/6. Functionally, hydrolyzes the pyrophosphate bond of UDP-2,3-diacylglucosamine to yield 2,3-diacylglucosamine 1-phosphate (lipid X) and UMP by catalyzing the attack of water at the alpha-P atom. Involved in the biosynthesis of lipid A, a phosphorylated glycolipid that anchors the lipopolysaccharide to the outer membrane of the cell. The protein is UDP-2,3-diacylglucosamine hydrolase of Actinobacillus succinogenes (strain ATCC 55618 / DSM 22257 / CCUG 43843 / 130Z).